Reading from the N-terminus, the 1372-residue chain is Paired amphipathic helix protein Sin3-like 1 (1372 aa).

A disordered region spans residues Met1–Ser50. PAH domains lie at Gln51 to Gly121 and Lys136 to Ser206. Over residues His210–Gln222 the composition is skewed to low complexity. Disordered stretches follow at residues His210–Arg244 and Arg272–Ala323. Over residues Arg272–Ala315 the composition is skewed to basic and acidic residues. One can recognise a PAH 3 domain in the interval Leu331–Cys400. 3 disordered regions span residues Asp764–Thr783, Leu791–Ser817, and Gly934–Met1056. Residues Asp938 to Lys957 are compositionally biased toward basic and acidic residues. Acidic residues-rich tracts occupy residues Ala990–Asn1013 and Ser1028–Glu1042. At Ser1049 the chain carries Phosphoserine.

In terms of assembly, interacts (via PAH3) with ALY2. Interacts (via PAH2) with TBP1. Interacts with ALY3, GATA21, TRP2, TKI1, VAL1, SKP1B, FBX5 and PUB14.

The protein resides in the nucleus. Functionally, acts as a transcriptional repressor. A histone deacetylase (HDAC) activity is required for transcription repression. May play a role in telomere stability. The polypeptide is Paired amphipathic helix protein Sin3-like 1 (SNL1) (Arabidopsis thaliana (Mouse-ear cress)).